A 412-amino-acid chain; its full sequence is MKVYLVGGAVRDSLLNLPIKDRDWVIVGGTKEILLKKNFQQVGKDFPVFLHPETHEEYSLARKERKSGRGYTGFHTEFSSDVTLEEDLIRRDLTINAIAQDENGNYIDPFQGRKDLNLRLLRHVSESFTEDPLRILRTARFAANLMHLGFHIDKDTMILMCKMVKKNELLYLTKNRIWNETEKAFKTLNPHVYFQILHACKALNFIFPEIFFLYERRTFFSILFTNFYSISFLSIGLSKISTLTKDVSIRFSYLCQFLSEKIDFSSTKENYDDDSAKLVKKLCKRCNIPSHIEELAVLNTGFCVFLSSIHYQSSSNIIKMFSKIDAWRKPDRIYKLSFLCDFNLFYHQNKIDNSKLKTGFLKKCFFIIKDISVKKILNQGFKGYQIKNELNKLRVNKLKFWRMKKKCFFFKE.

ATP is bound by residues Gly-8 and Arg-11. Residues Gly-8 and Arg-11 each coordinate CTP. Asp-21 and Asp-23 together coordinate Mg(2+). Residues Arg-91, Arg-137, and Arg-140 each coordinate ATP. CTP contacts are provided by Arg-91, Arg-137, and Arg-140.

Belongs to the tRNA nucleotidyltransferase/poly(A) polymerase family. Bacterial CCA-adding enzyme type 2 subfamily. It depends on Mg(2+) as a cofactor.

It carries out the reaction a tRNA precursor + 2 CTP + ATP = a tRNA with a 3' CCA end + 3 diphosphate. The catalysed reaction is a tRNA with a 3' CCA end + 2 CTP + ATP = a tRNA with a 3' CCACCA end + 3 diphosphate. Catalyzes the addition and repair of the essential 3'-terminal CCA sequence in tRNAs without using a nucleic acid template. Adds these three nucleotides in the order of C, C, and A to the tRNA nucleotide-73, using CTP and ATP as substrates and producing inorganic pyrophosphate. tRNA 3'-terminal CCA addition is required both for tRNA processing and repair. Also involved in tRNA surveillance by mediating tandem CCA addition to generate a CCACCA at the 3' terminus of unstable tRNAs. While stable tRNAs receive only 3'-terminal CCA, unstable tRNAs are marked with CCACCA and rapidly degraded. This Buchnera aphidicola subsp. Schizaphis graminum (strain Sg) protein is CCA-adding enzyme.